Consider the following 789-residue polypeptide: DNA topoisomerase 4 subunit A (789 aa).

In terms of domain architecture, Topo IIA-type catalytic spans 34-499 (LPDLRDGLKP…EKQKVQDSDF (466 aa)). Tyr122 acts as the O-(5'-phospho-DNA)-tyrosine intermediate in catalysis.

Belongs to the type II topoisomerase GyrA/ParC subunit family. ParC type 2 subfamily. As to quaternary structure, heterotetramer composed of ParC and ParE.

It localises to the cell membrane. The catalysed reaction is ATP-dependent breakage, passage and rejoining of double-stranded DNA.. Functionally, topoisomerase IV is essential for chromosome segregation. It relaxes supercoiled DNA. Performs the decatenation events required during the replication of a circular DNA molecule. The protein is DNA topoisomerase 4 subunit A of Mycoplasma pneumoniae (strain ATCC 29342 / M129 / Subtype 1) (Mycoplasmoides pneumoniae).